Reading from the N-terminus, the 259-residue chain is Protein FAM220A (259 aa).

Disordered stretches follow at residues 1 to 44 (MRDR…ADAP) and 131 to 154 (LGGGPRATDGHRGQCPKGEPRVSR). Residues 138–152 (TDGHRGQCPKGEPRV) are compositionally biased toward basic and acidic residues.

In terms of assembly, interacts with transcriptional activator STAT3; the interaction occurs in both the nucleus and the cytoplasm, is enhanced by IL6 and promotes STAT3 dephosphorylation, leading to negative regulation of STAT3 transcriptional activator activity. Can interact with both unphosphorylated and phosphorylated STAT3 but interacts preferentially with phosphorylated STAT3 in the nucleus. Interacts with protein phosphatase PTPN2/TC45; this promotes interaction of PTPN2 with STAT3, leading to dephosphorylation of STAT3 by PTPN2.

The protein localises to the nucleus. It localises to the cytoplasm. Its subcellular location is the cytoplasmic vesicle. The protein resides in the secretory vesicle. It is found in the acrosome. In terms of biological role, promotes dephosphorylation of transcriptional activator STAT3 by interacting with both STAT3 and protein phosphatase PTPN2. This promotes interaction of PTPN2 with STAT3 and mediates STAT3 dephosphorylation by PTPN2, leading to negative regulation of STAT3 transcriptional activator activity. May be required for spermiogenesis or sperm function. This chain is Protein FAM220A, found in Homo sapiens (Human).